We begin with the raw amino-acid sequence, 91 residues long: Acylphosphatase (91 aa).

Positions His-3–Tyr-91 constitute an Acylphosphatase-like domain. Residues Arg-18 and Asn-36 contribute to the active site.

It belongs to the acylphosphatase family.

It carries out the reaction an acyl phosphate + H2O = a carboxylate + phosphate + H(+). The polypeptide is Acylphosphatase (acyP) (Oceanobacillus iheyensis (strain DSM 14371 / CIP 107618 / JCM 11309 / KCTC 3954 / HTE831)).